Here is a 685-residue protein sequence, read N- to C-terminus: Beta-taxilin (685 aa).

The interval 1–135 (MEINHPDQLS…KEPVSNKEQK (135 aa)) is disordered. Residues 18–28 (GDSSSLNQNGP) show a composition bias toward polar residues. Basic and acidic residues-rich tracts occupy residues 47–67 (GSLH…RQLE) and 80–90 (RGKESTSETKE). Positions 98-113 (PDNEDVDYEETTEEID) are enriched in acidic residues. 2 coiled-coil regions span residues 138-354 (KKIL…VLKE) and 381-470 (NEVF…SEKE). Residues 465-478 (KMSEKEDQVQRTSE) show a composition bias toward basic and acidic residues. Disordered regions lie at residues 465-497 (KMSE…EEAN) and 517-685 (EFTP…NGVD). Residues serine 477, serine 484, and serine 486 each carry the phosphoserine modification. The span at 479–495 (EEPEPSVSENEEVDAEE) shows a compositional bias: acidic residues. Low complexity predominate over residues 575–591 (CEATPAPTASCTPAEAE). The segment covering 612–627 (ANTSGQAPLSPAQGSL) has biased composition (polar residues).

This sequence belongs to the taxilin family. In terms of assembly, binds to the C-terminal coiled coil region of syntaxin family members STX1A, STX3A and STX4A. Has a preference for STX1A. As to expression, specifically expressed in skeletal muscle.

Promotes motor nerve regeneration. May be involved in intracellular vesicle traffic. The polypeptide is Beta-taxilin (Txlnb) (Mus musculus (Mouse)).